Reading from the N-terminus, the 335-residue chain is MVRRDRLRRMREWWVQVGLLAVPLLAAYLHIPPPQLSPALHSWKTSGKFFTYKGLRIFYQDSVGVVGSPEIVVLLHGFPTSSYDWYKIWEGLTLRFHRVIALDFLGFGFSDKPRPHQYSIFEQASIVESLLRHLGLQNRRINLLSHDYGDIVAQELLYRYKQNRSGRLTIKSLCLSNGGIFPETHRPLLLQKLLKDGGVLSPILTRLMNFFVFSRGLTPVFGPYTRPTESELWDMWAVIRNNDGNLVIDSLLQYINQRKKFRRRWVGALASVSIPIHFIYGPLDPINPYPEFLELYRKTLPRSTVSILDDHISHYPQLEDPMGFLNAYMGFINSF.

The next 2 helical transmembrane spans lie at 13-33 and 63-83; these read WWVQ…HIPP and VGVV…TSSY. Residues 71-310 enclose the AB hydrolase-1 domain; the sequence is IVVLLHGFPT…PRSTVSILDD (240 aa). An RVIALD motif is present at residues 98–103; that stretch reads RVIALD. Asparagine 163 carries an N-linked (GlcNAc...) asparagine glycan. The chain crosses the membrane as a helical span at residues 266 to 286; it reads VGALASVSIPIHFIYGPLDPI.

Belongs to the AB hydrolase superfamily. In terms of tissue distribution, expressed in mesodermal tissues. Isoform 1 is exclusively expressed from the paternal allele in all fetal tissues and cell lines examined, whereas isoform 2 is preferentially expressed from the paternal allele in a tissue-type-specific manner.

The protein resides in the endoplasmic reticulum membrane. In Mus musculus (Mouse), this protein is Mesoderm-specific transcript protein (Mest).